Reading from the N-terminus, the 232-residue chain is Putative quercetin 2,3-dioxygenase PA1210 (232 aa).

4 residues coordinate a divalent metal cation: His57, His59, His101, and Glu103.

The protein belongs to the pirin family. A divalent metal cation is required as a cofactor.

The enzyme catalyses quercetin + O2 = 2-(3,4-dihydroxybenzoyloxy)-4,6-dihydroxybenzoate + CO. It participates in flavonoid metabolism; quercetin degradation. Its function is as follows. Putative quercetin 2,3-dioxygenase. This is Putative quercetin 2,3-dioxygenase PA1210 from Pseudomonas aeruginosa (strain ATCC 15692 / DSM 22644 / CIP 104116 / JCM 14847 / LMG 12228 / 1C / PRS 101 / PAO1).